The chain runs to 158 residues: C-type lectin (158 aa).

An N-terminal signal peptide occupies residues 1 to 23; sequence MGHFTFISLCLMPIFLSLSGAEC. 4 cysteine pairs are disulfide-bonded: Cys26–Cys37, Cys54–Cys154, Cys61–Cys156, and Cys129–Cys146. In terms of domain architecture, C-type lectin spans 33-155; the sequence is RNGLCYKLFD…CESLFAFICR (123 aa). Asn111 and Asn121 each carry an N-linked (GlcNAc...) asparagine glycan. Residues 119-121 carry the Mannose-binding motif; it reads EPN. Ca(2+)-binding residues include Glu127, Asn142, and Asp143.

It belongs to the true venom lectin family. As to quaternary structure, homodimer; non-covalently linked. As to expression, expressed by the venom gland.

It is found in the secreted. Functionally, mannose-binding lectin which recognizes specific carbohydrate structures and agglutinates a variety of animal cells by binding to cell-surface glycoproteins and glycolipids. May be a calcium-dependent lectin. The protein is C-type lectin of Micrurus corallinus (Brazilian coral snake).